The primary structure comprises 377 residues: MAALQAAVSSQLAISFFSSLIVPGAEKNVVCSPLSISSALALVAAGSRGKTLKEIADALNWREDADGLAKALLAEAEKAAQNCDASCPVKTANNVWVDNEFKILDSYRDLLKSFAVNVGKADFKKHSSDETIKINSWIEDHTNKKIRDFFPPGELSEATKAVLVNALYFKGKWAEPFDMESTRDDTFHVSNSKEVQVKMMYHSAELKYFMDENSKCDLVELPYSSKAFSMMLIVPHEVEGLSAVQSSLSLSQVSGWISNVQSAAPQTVDVFLPRFKVSQKVNMKDNLKSLGINDMFSMQANLSGIAGSHDLFVSSAIHQAVIEVNEEGTEAAAATGFGVNFMSMPMQVRADKPFLFLIISNVTKSILFIGKIANPAA.

An N-terminal signal peptide occupies residues 1 to 27 (MAALQAAVSSQLAISFFSSLIVPGAEK). N301 is a glycosylation site (N-linked (GlcNAc...) asparagine). Residues 328-349 (GTEAAAATGFGVNFMSMPMQVR) form an RCL region. N361 carries N-linked (GlcNAc...) asparagine glycosylation.

The protein belongs to the serpin family.

Inhibitor of serine proteases. Inhibits chymotrypsin, cathepsin G and human neutrophil elastase. The polypeptide is Serine protease inhibitor (Cyanea capillata (Lion's mane jellyfish)).